A 112-amino-acid polypeptide reads, in one-letter code: Cytochrome c (112 aa).

Heme c is bound by residues C23, C26, and H27. N6,N6,N6-trimethyllysine is present on K81. M89 is a binding site for heme c. Position 95 is an N6,N6,N6-trimethyllysine (K95).

Belongs to the cytochrome c family. In terms of processing, binds 1 heme c group covalently per subunit.

It localises to the mitochondrion intermembrane space. Its function is as follows. Electron carrier protein. The oxidized form of the cytochrome c heme group can accept an electron from the heme group of the cytochrome c1 subunit of cytochrome reductase. Cytochrome c then transfers this electron to the cytochrome oxidase complex, the final protein carrier in the mitochondrial electron-transport chain. The chain is Cytochrome c (CC-1) from Arabidopsis thaliana (Mouse-ear cress).